A 306-amino-acid polypeptide reads, in one-letter code: Proline-rich transmembrane protein 1 (306 aa).

Residues 1–142 (MSSEKSGLPD…PPPAPAQTAQ (142 aa)) are disordered. The Cytoplasmic portion of the chain corresponds to 1–223 (MSSEKSGLPD…LEPRRPPHDY (223 aa)). Over residues 15-36 (TSPPPYNAPQPPAEPPAPPPQA) the composition is skewed to pro residues. Residues 40–49 (SHHHHHHHYH) are compositionally biased toward basic residues. 2 stretches are compositionally biased toward pro residues: residues 87–111 (HAPPGPAAGAPPPGCATLPRMPPDP) and 121–137 (PLPPPPPAAAAPPPPAP). Residues 224-244 (MPIAVLTTICCFWPTGIIAIF) form a helical membrane-spanning segment. The Extracellular portion of the chain corresponds to 245–275 (KAVQVRTALARGDMVSAEIASREARNFSFIS). The helical intramembrane region spans 276–296 (LAVGIAAMVLCTILTVVIIIA). Residues 297-306 (AQHHENYWDP) lie on the Extracellular side of the membrane.

Belongs to the CD225/Dispanin family. As to quaternary structure, component of the outer core of AMPAR complex. AMPAR complex consists of an inner core made of 4 pore-forming GluA/GRIA proteins (GRIA1, GRIA2, GRIA3 and GRIA4) and 4 major auxiliary subunits arranged in a twofold symmetry. One of the two pairs of distinct binding sites is occupied either by CNIH2, CNIH3 or CACNG2, CACNG3. The other harbors CACNG2, CACNG3, CACNG4, CACNG8 or GSG1L. This inner core of AMPAR complex is complemented by outer core constituents binding directly to the GluA/GRIA proteins at sites distinct from the interaction sites of the inner core constituents. Outer core constituents include at least PRRT1, PRRT2, CKAMP44/SHISA9, FRRS1L and NRN1. The proteins of the inner and outer core serve as a platform for other, more peripherally associated AMPAR constituents. Alone or in combination, these auxiliary subunits control the gating and pharmacology of the AMPAR complex and profoundly impact their biogenesis and protein processing.

The protein resides in the cell membrane. Its subcellular location is the synapse. In terms of biological role, required to maintain a pool of extrasynaptic AMPA-regulated glutamate receptors (AMPAR) which is necessary for synapse development and function. Regulates basal AMPAR function and synaptic transmission during development but is dispensable at mature hippocampal synapses. Plays a role in regulating basal phosphorylation levels of glutamate receptor GRIA1 and promotes GRIA1 and GRIA2 cell surface expression. This Homo sapiens (Human) protein is Proline-rich transmembrane protein 1.